Here is a 404-residue protein sequence, read N- to C-terminus: Probable glucan endo-1,6-beta-glucosidase B (404 aa).

An N-terminal signal peptide occupies residues 1-20 (MTTYQTLFLIPLAISTLVTA). N33 and N130 each carry an N-linked (GlcNAc...) asparagine glycan. The Proton donor role is filled by E222. Residues N253 and N299 are each glycosylated (N-linked (GlcNAc...) asparagine). E324 functions as the Nucleophile in the catalytic mechanism.

This sequence belongs to the glycosyl hydrolase 5 (cellulase A) family.

It is found in the secreted. It catalyses the reaction Random hydrolysis of (1-&gt;6)-linkages in (1-&gt;6)-beta-D-glucans.. Functionally, beta-glucanases participate in the metabolism of beta-glucan, the main structural component of the cell wall. Acts on lutean, pustulan and 1,6-oligo-beta-D-glucosides. The sequence is that of Probable glucan endo-1,6-beta-glucosidase B (exgB) from Aspergillus terreus (strain NIH 2624 / FGSC A1156).